The sequence spans 503 residues: MATQSDMEKEQKHQQDEGQGGLNNETALASGDACGTGNQDPAASVTTVSSQASPSGGAALSSSTAGSSAAAATSAAIFITDEASGLPIIAAVLTERHSDRQDCRSPHEVFGCVVPEGGSQAAVGPQKATGHADEHLAQTKSPGNSRRRKQPCRNQAAPAQKPPGRRLFPEPLPPSSPGFRPSSYPCSGASTSSQATQPGPALLSHASEARPATRSRITLVASALRRRASGPGPVIRGCTAQPGPAFPHRATHLDPARLSPESAPGPARRGRASVPGPARRGCDSAPGPARRGRDSAPVSAPRGRDSAPGSARRGRDSAPGPALRVRTARSDAGHRSTSTTPGTGLRSRSTQQRSALLSRRSLSGSADENPSCGTGSERLAFQSRSGSPDPEVPSRASPPVWHAVRMRASSPSPPGRFFLPIPQQWDESSSSSYASNSSSPSRSPGLSPSSPSPEFLGLRSISTPSPESLRYALMPEFYALSPVPPEEQAEIESTAHPATPPEP.

A compositionally biased stretch (basic and acidic residues) spans 1–16 (MATQSDMEKEQKHQQD). Disordered regions lie at residues 1–72 (MATQ…AAAA), 97–462 (HSDR…RSIS), and 483–503 (VPPE…PPEP). The segment covering 41-72 (PAASVTTVSSQASPSGGAALSSSTAGSSAAAA) has biased composition (low complexity). A compositionally biased stretch (basic and acidic residues) spans 97–107 (HSDRQDCRSPH). The segment covering 184–197 (YPCSGASTSSQATQ) has biased composition (polar residues). The residue at position 259 (Ser-259) is a Phosphoserine. The span at 345–366 (LRSRSTQQRSALLSRRSLSGSA) shows a compositional bias: low complexity. The tract at residues 401–409 (WHAVRMRAS) is sufficient for interaction with EZH2. Residues 403–423 (AVRMRASSPSPPGRFFLPIPQ) form a necessary and sufficient for inhibition of PRC2/EED-EZH1 and PRC2/EED-EZH2 complex activity region. Residues 428 to 453 (SSSSSYASNSSSPSRSPGLSPSSPSP) are compositionally biased toward low complexity.

As to quaternary structure, interacts with PRC2/EED-EZH1 complex member EZH1 and with PRC2/EED-EZH2 complex member EZH2; the interaction blocks EZH1/EZH2 methyltransferase activity. Interacts (via C-terminus) with SUZ12 which is a member of the PRC2/EED-EZH1 and PRC2/EED-EZH2 complexes. In testis, detected in male germ cells inside the seminiferous tubules, especially in spermatogonia and round spermatids (at protein level). In the ovary, expressed in primordial follicles and oocytes but not the external follicle cells (at protein level).

The protein localises to the nucleus. It is found in the cytoplasm. Its function is as follows. Inhibits PRC2/EED-EZH1 and PRC2/EED-EZH2 complex function by inhibiting EZH1/EZH2 methyltransferase activity, thereby causing down-regulation of histone H3 trimethylation on 'Lys-27' (H3K27me3). Probably inhibits methyltransferase activity by limiting the stimulatory effect of cofactors such as AEBP2 and JARID2. Inhibits H3K27me3 deposition during spermatogenesis and oogenesis. The protein is EZH inhibitory protein of Homo sapiens (Human).